Consider the following 382-residue polypeptide: UDP-4-amino-4-deoxy-L-arabinose--oxoglutarate aminotransferase (382 aa).

Lys-183 carries the post-translational modification N6-(pyridoxal phosphate)lysine.

Belongs to the DegT/DnrJ/EryC1 family. ArnB subfamily. In terms of assembly, homodimer. Pyridoxal 5'-phosphate is required as a cofactor.

The enzyme catalyses UDP-4-amino-4-deoxy-beta-L-arabinose + 2-oxoglutarate = UDP-beta-L-threo-pentopyranos-4-ulose + L-glutamate. Its pathway is nucleotide-sugar biosynthesis; UDP-4-deoxy-4-formamido-beta-L-arabinose biosynthesis; UDP-4-deoxy-4-formamido-beta-L-arabinose from UDP-alpha-D-glucuronate: step 2/3. It functions in the pathway bacterial outer membrane biogenesis; lipopolysaccharide biosynthesis. In terms of biological role, catalyzes the conversion of UDP-4-keto-arabinose (UDP-Ara4O) to UDP-4-amino-4-deoxy-L-arabinose (UDP-L-Ara4N). The modified arabinose is attached to lipid A and is required for resistance to polymyxin and cationic antimicrobial peptides. The chain is UDP-4-amino-4-deoxy-L-arabinose--oxoglutarate aminotransferase from Pseudomonas syringae pv. syringae (strain B728a).